The following is an 89-amino-acid chain: Class II hydrophobin 2 (89 aa).

A signal peptide spans methionine 1–alanine 15. Cystine bridges form between cysteine 34-cysteine 74, cysteine 45-cysteine 66, cysteine 46-cysteine 58, and cysteine 75-cysteine 86.

It belongs to the cerato-ulmin hydrophobin family. As to quaternary structure, homodimer. Homodimers further self-assemble to form highly ordered films at water-air interfaces through intermolecular interactions.

The protein localises to the secreted. Its subcellular location is the cell wall. Its function is as follows. Aerial growth, conidiation, and dispersal of filamentous fungi in the environment rely upon a capability of their secreting small amphipathic proteins called hydrophobins (HPBs) with low sequence identity. Class I can self-assemble into an outermost layer of rodlet bundles on aerial cell surfaces, conferring cellular hydrophobicity that supports fungal growth, development and dispersal; whereas Class II form highly ordered films at water-air interfaces through intermolecular interactions but contribute nothing to the rodlet structure. The polypeptide is Class II hydrophobin 2 (Trichoderma asperellum (strain ATCC 204424 / CBS 433.97 / NBRC 101777)).